Here is a 477-residue protein sequence, read N- to C-terminus: Ribulose bisphosphate carboxylase large chain (477 aa).

Residues 1–2 (MS) constitute a propeptide that is removed on maturation. An N-acetylproline modification is found at proline 3. Substrate is bound by residues asparagine 123 and threonine 173. The active-site Proton acceptor is the lysine 175. Lysine 177 provides a ligand contact to substrate. Mg(2+)-binding residues include lysine 201, aspartate 203, and glutamate 204. At lysine 201 the chain carries N6-carboxylysine. Histidine 294 acts as the Proton acceptor in catalysis. Residues arginine 295, histidine 327, and serine 379 each coordinate substrate.

It belongs to the RuBisCO large chain family. Type I subfamily. As to quaternary structure, heterohexadecamer of 8 large chains and 8 small chains; disulfide-linked. The disulfide link is formed within the large subunit homodimers. Mg(2+) serves as cofactor. In terms of processing, the disulfide bond which can form between Cys-247 in the large chain dimeric partners within the hexadecamer appears to be associated with oxidative stress and protein turnover.

Its subcellular location is the plastid. It localises to the chloroplast. It carries out the reaction 2 (2R)-3-phosphoglycerate + 2 H(+) = D-ribulose 1,5-bisphosphate + CO2 + H2O. The catalysed reaction is D-ribulose 1,5-bisphosphate + O2 = 2-phosphoglycolate + (2R)-3-phosphoglycerate + 2 H(+). Its function is as follows. RuBisCO catalyzes two reactions: the carboxylation of D-ribulose 1,5-bisphosphate, the primary event in carbon dioxide fixation, as well as the oxidative fragmentation of the pentose substrate in the photorespiration process. Both reactions occur simultaneously and in competition at the same active site. The sequence is that of Ribulose bisphosphate carboxylase large chain (rbcL) from Triticum aestivum (Wheat).